Reading from the N-terminus, the 209-residue chain is Lectin (209 aa).

As to quaternary structure, homodimer; non-covalently linked.

Binds chito-oligosaccherides. Has hemagglutinating activity towards rabbit erythrocytes. This chain is Lectin, found in Luffa acutangula (Ridged gourd).